The following is a 407-amino-acid chain: Putative F-box protein At5g60560 (407 aa).

The F-box domain maps to Thr-2–Lys-49.

This chain is Putative F-box protein At5g60560, found in Arabidopsis thaliana (Mouse-ear cress).